Consider the following 355-residue polypeptide: Peptide chain release factor 1 (355 aa).

Position 233 is an N5-methylglutamine (glutamine 233).

This sequence belongs to the prokaryotic/mitochondrial release factor family. Post-translationally, methylated by PrmC. Methylation increases the termination efficiency of RF1.

It localises to the cytoplasm. In terms of biological role, peptide chain release factor 1 directs the termination of translation in response to the peptide chain termination codons UAG and UAA. This is Peptide chain release factor 1 from Caldicellulosiruptor saccharolyticus (strain ATCC 43494 / DSM 8903 / Tp8T 6331).